A 451-amino-acid polypeptide reads, in one-letter code: Tubulin beta-1 chain (451 aa).

Residues 1-4 carry the MREI motif motif; that stretch reads MREI. 6 residues coordinate GTP: Gln11, Glu69, Ser138, Gly142, Thr143, and Gly144. Glu69 is a Mg(2+) binding site. Ser172 carries the phosphoserine; by CDK1 modification. Residues Asn204 and Asn226 each contribute to the GTP site. The segment at 430–451 is disordered; that stretch reads AGLEDSEEDVEEAEVEAEDKDH. Positions 433 to 451 are enriched in acidic residues; it reads EDSEEDVEEAEVEAEDKDH. Ser435 bears the Phosphoserine mark. Glu440 carries the post-translational modification 5-glutamyl polyglutamate.

The protein belongs to the tubulin family. Dimer of alpha and beta chains. A typical microtubule is a hollow water-filled tube with an outer diameter of 25 nm and an inner diameter of 15 nM. Alpha-beta heterodimers associate head-to-tail to form protofilaments running lengthwise along the microtubule wall with the beta-tubulin subunit facing the microtubule plus end conferring a structural polarity. Microtubules usually have 13 protofilaments but different protofilament numbers can be found in some organisms and specialized cells. Interacts with RANBP10. It depends on Mg(2+) as a cofactor. Post-translationally, some glutamate residues at the C-terminus are polyglycylated, resulting in polyglycine chains on the gamma-carboxyl group. Glycylation is mainly limited to tubulin incorporated into axonemes (cilia and flagella) whereas glutamylation is prevalent in neuronal cells, centrioles, axonemes, and the mitotic spindle. Both modifications can coexist on the same protein on adjacent residues, and lowering polyglycylation levels increases polyglutamylation, and reciprocally. Cilia and flagella glycylation is required for their stability and maintenance. Flagella glycylation controls sperm motility. In terms of processing, some glutamate residues at the C-terminus are polyglutamylated, resulting in polyglutamate chains on the gamma-carboxyl group. Polyglutamylation plays a key role in microtubule severing by spastin (SPAST). SPAST preferentially recognizes and acts on microtubules decorated with short polyglutamate tails: severing activity by SPAST increases as the number of glutamates per tubulin rises from one to eight, but decreases beyond this glutamylation threshold. Glutamylation is also involved in cilia motility. Phosphorylated on Ser-172 by CDK1 during the cell cycle, from metaphase to telophase, but not in interphase. This phosphorylation inhibits tubulin incorporation into microtubules.

It localises to the cytoplasm. The protein localises to the cytoskeleton. Functionally, tubulin is the major constituent of microtubules, a cylinder consisting of laterally associated linear protofilaments composed of alpha- and beta-tubulin heterodimers. Microtubules grow by the addition of GTP-tubulin dimers to the microtubule end, where a stabilizing cap forms. Below the cap, tubulin dimers are in GDP-bound state, owing to GTPase activity of alpha-tubulin. The sequence is that of Tubulin beta-1 chain (Tubb1) from Mus musculus (Mouse).